A 545-amino-acid polypeptide reads, in one-letter code: CTP synthase (545 aa).

Residues 1-266 are amidoligase domain; sequence MTTKYIFVTG…DQLVVDRFGL (266 aa). Ser14 serves as a coordination point for CTP. A UTP-binding site is contributed by Ser14. Residues 15 to 20 and Asp72 contribute to the ATP site; that span reads SLGKGI. Asp72 and Glu140 together coordinate Mg(2+). CTP-binding positions include 147 to 149, 187 to 192, and Lys223; these read DIE and KTKPTQ. Residues 187–192 and Lys223 each bind UTP; that span reads KTKPTQ. 239–241 contacts ATP; sequence KDV. The Glutamine amidotransferase type-1 domain occupies 291–542; the sequence is TIGMVGKYVS…IQAAGEYMKR (252 aa). Gly352 serves as a coordination point for L-glutamine. Cys379 functions as the Nucleophile; for glutamine hydrolysis in the catalytic mechanism. Residues 380–383, Glu403, and Arg470 each bind L-glutamine; that span reads LGMQ. Active-site residues include His515 and Glu517.

It belongs to the CTP synthase family. In terms of assembly, homotetramer.

The enzyme catalyses UTP + L-glutamine + ATP + H2O = CTP + L-glutamate + ADP + phosphate + 2 H(+). It catalyses the reaction L-glutamine + H2O = L-glutamate + NH4(+). It carries out the reaction UTP + NH4(+) + ATP = CTP + ADP + phosphate + 2 H(+). It functions in the pathway pyrimidine metabolism; CTP biosynthesis via de novo pathway; CTP from UDP: step 2/2. Allosterically activated by GTP, when glutamine is the substrate; GTP has no effect on the reaction when ammonia is the substrate. The allosteric effector GTP functions by stabilizing the protein conformation that binds the tetrahedral intermediate(s) formed during glutamine hydrolysis. Inhibited by the product CTP, via allosteric rather than competitive inhibition. Functionally, catalyzes the ATP-dependent amination of UTP to CTP with either L-glutamine or ammonia as the source of nitrogen. Regulates intracellular CTP levels through interactions with the four ribonucleotide triphosphates. The protein is CTP synthase of Tolumonas auensis (strain DSM 9187 / NBRC 110442 / TA 4).